Reading from the N-terminus, the 524-residue chain is REH2-associated factor 1 (524 aa).

The N-terminal 22 residues, 1–22 (MRRWLVASMAPQLHQLLQPVRR), are a transit peptide targeting the mitochondrion. The segment at 48-70 (ASCPACSRVVHMCDMLTHLITAH) adopts a C2H2-type 1; atypical zinc-finger fold. The segment at 121–147 (YMCNWCDRRSDVYATRDKFLKHVADVH) adopts a C2H2-type 2; atypical zinc-finger fold. A C2H2-type 4 zinc finger spans residues 226-249 (FPCELCNRTFNSEIDLLQHLETRH). The segment at 286–312 (VICDLCVSSSKVYKMPSALFSHIRFKH) adopts a C2H2-type 3; atypical zinc-finger fold. 4 consecutive C2H2-type zinc fingers follow at residues 334 to 357 (FVCTVCQKAFASAAALDGHFNSKH), 376 to 399 (WWCHDCEKGFSSAKGLHGHMQNKH), 406 to 429 (HPCPACKRVFADIYSLEEHLSLQH), and 443 to 465 (VKCSTCERFFLSHEDLHRHAVKH). Positions 463-524 (VKHHKKDPRA…KTTEVSEVTS (62 aa)) are disordered. Over residues 479-500 (APTSASHVAASTSAAVPSEVEA) the composition is skewed to low complexity.

As to quaternary structure, component of the REH2-associated complex (REH2C) composed of helicase REH2, associated factors H2F1 and H2F2, and mRNAs at various editing stages; the formation of the complex is RNA-independent. Within the complex, interacts with REH2; the interaction is direct. Interacts with various editing complexes including the RNA editing core (RECC) complex, the gRNA-binding (GRBC) complex (also known as the MRB1 complex) and the RNA editing mediator (REMC) complex.

The protein localises to the mitochondrion. Functionally, plays an important role in mitochondrial mRNA editing by promoting the assembly of the mRNA editosome. Facilitates the recruitment of mRNA to the REH2C complex and promotes the interaction between various editing complexes including REH2C, GRBC, REMC and RECC complexes. This is REH2-associated factor 1 from Trypanosoma brucei brucei (strain 927/4 GUTat10.1).